The following is a 505-amino-acid chain: UDP-N-acetylmuramyl-tripeptide synthetase (505 aa).

Position 35 (Ser35) interacts with UDP-N-acetyl-alpha-D-muramoyl-L-alanyl-D-glutamate. 118-124 (GTDGKSS) serves as a coordination point for ATP. UDP-N-acetyl-alpha-D-muramoyl-L-alanyl-D-glutamate-binding positions include 163–164 (ST), Thr190, and Arg200. Residue Lys232 is modified to N6-carboxylysine.

It belongs to the MurCDEF family. MurE subfamily. In terms of processing, carboxylation is probably crucial for Mg(2+) binding and, consequently, for the gamma-phosphate positioning of ATP.

The protein localises to the cytoplasm. Its pathway is cell wall biogenesis; peptidoglycan biosynthesis. In terms of biological role, catalyzes the addition of an amino acid to the nucleotide precursor UDP-N-acetylmuramoyl-L-alanyl-D-glutamate (UMAG) in the biosynthesis of bacterial cell-wall peptidoglycan. In Borreliella afzelii (strain PKo) (Borrelia afzelii), this protein is UDP-N-acetylmuramyl-tripeptide synthetase.